Consider the following 218-residue polypeptide: Thiopurine S-methyltransferase (218 aa).

S-adenosyl-L-methionine-binding residues include Trp10, Leu45, Glu66, and Arg123.

It belongs to the class I-like SAM-binding methyltransferase superfamily. TPMT family.

It localises to the cytoplasm. It catalyses the reaction S-adenosyl-L-methionine + a thiopurine = S-adenosyl-L-homocysteine + a thiopurine S-methylether.. The chain is Thiopurine S-methyltransferase from Pseudomonas fluorescens (strain SBW25).